Reading from the N-terminus, the 179-residue chain is uncharacterized protein (179 aa).

The span at 1 to 14 (MTKKVKLDQDEINN) shows a compositional bias: basic and acidic residues. Disordered regions lie at residues 1-90 (MTKK…NNFC) and 121-147 (HKKS…DKKV). 2 stretches are compositionally biased toward low complexity: residues 15–90 (KNKN…NNFC) and 126–137 (RSQSQSSLNSFD). Residues 138-147 (QDNKSKDKKV) are compositionally biased toward basic and acidic residues.

This is an uncharacterized protein from Dictyostelium discoideum (Social amoeba).